A 265-amino-acid polypeptide reads, in one-letter code: Undecaprenyl-diphosphatase (265 aa).

Transmembrane regions (helical) follow at residues 1 to 21 (MDWLHVVALAVIQGLTEFLPI), 40 to 60 (GLAFDVAVHVGSLAAVVLAFH), 87 to 107 (WAVIVGTLPAVVIGFLLENVI), 113 to 133 (ASLVIAITTLLFGLLLWWADV), 151 to 173 (IIGFAQALALIPGTSRSGITITA), 188 to 208 (SFLLSIPLILAAGSLKGVELI), 214 to 234 (VAWGTLVAGTLMSFVAAWLCI), and 244 to 264 (IGMLPFVIYRLILGIVLLVWV).

This sequence belongs to the UppP family.

It localises to the cell inner membrane. It catalyses the reaction di-trans,octa-cis-undecaprenyl diphosphate + H2O = di-trans,octa-cis-undecaprenyl phosphate + phosphate + H(+). In terms of biological role, catalyzes the dephosphorylation of undecaprenyl diphosphate (UPP). Confers resistance to bacitracin. This Chromohalobacter salexigens (strain ATCC BAA-138 / DSM 3043 / CIP 106854 / NCIMB 13768 / 1H11) protein is Undecaprenyl-diphosphatase.